The following is a 201-amino-acid chain: Small ribosomal subunit protein uS4 (201 aa).

One can recognise an S4 RNA-binding domain in the interval 91–151 (SRLDNVVYRA…EKSRKMVWFD (61 aa)).

This sequence belongs to the universal ribosomal protein uS4 family. In terms of assembly, part of the 30S ribosomal subunit. Contacts protein S5. The interaction surface between S4 and S5 is involved in control of translational fidelity.

One of the primary rRNA binding proteins, it binds directly to 16S rRNA where it nucleates assembly of the body of the 30S subunit. Functionally, with S5 and S12 plays an important role in translational accuracy. In Corynebacterium kroppenstedtii (strain DSM 44385 / JCM 11950 / CIP 105744 / CCUG 35717), this protein is Small ribosomal subunit protein uS4.